A 232-amino-acid polypeptide reads, in one-letter code: Ion-translocating oxidoreductase complex subunit E (232 aa).

6 helical membrane-spanning segments follow: residues glycine 18–alanine 38, leucine 39–valine 59, isoleucine 69–alanine 89, glycine 93–glycine 113, alanine 127–alanine 147, and proline 182–leucine 202.

It belongs to the NqrDE/RnfAE family. In terms of assembly, the complex is composed of six subunits: RnfA, RnfB, RnfC, RnfD, RnfE and RnfG.

Its subcellular location is the cell inner membrane. In terms of biological role, part of a membrane-bound complex that couples electron transfer with translocation of ions across the membrane. The polypeptide is Ion-translocating oxidoreductase complex subunit E (Shewanella sp. (strain ANA-3)).